Here is a 235-residue protein sequence, read N- to C-terminus: Eukaryotic translation initiation factor 4E-1 (235 aa).

The span at 1–16 (MAVEDTPKSVVTEEAK) shows a compositional bias: basic and acidic residues. Positions 1 to 59 (MAVEDTPKSVVTEEAKPNSIENPIDRYHEEGDDAEEGEIAGGEGDGNVDESSKSGVPES) are disordered. EIF4G-binding stretches follow at residues 60 to 63 (HPLE) and 70 to 106 (FDNPAVKSKQTSWGSSLRPVFTFSTVEEFWSLYNNMK). MRNA contacts are provided by residues 78–83 (KQTSWG), Lys-110, and 128–129 (WE). A disulfide bridge connects residues Cys-133 and Cys-171. The segment at 154-163 (YTLLALIGEQ) is EIF4G-binding. Residues 178–183 (RGKQER) and 223–227 (KKLDR) each bind mRNA.

The protein belongs to the eukaryotic initiation factor 4E family. EIF4F is a multi-subunit complex, the composition of which varies with external and internal environmental conditions. It is composed of at least EIF4A, EIF4E and EIF4G. EIF4E is also known to interact with other partners. In higher plants two isoforms of EIF4F have been identified, named isoform EIF4F and isoform EIF(iso)4F. Isoform EIF4F has subunits p220 and p26, whereas isoform EIF(iso)4F has subunits p82 and p28. Interacts directly with EXA1. As to quaternary structure, (Microbial infection) Interacts with viral genome-linked protein (VPg); this interaction is possible in susceptible hosts but impaired in resistant plants. Post-translationally, according to the redox status, the Cys-133-Cys-171 disulfide bridge may have a role in regulating protein function by affecting its ability to bind capped mRNA. In terms of tissue distribution, expressed in all tissues except in the cells of the specialization zone of the roots.

Its subcellular location is the nucleus. The protein localises to the cytoplasm. In terms of biological role, component of the protein complex eIF4F, which is involved in the recognition of the mRNA cap, ATP-dependent unwinding of 5'-terminal secondary structure and recruitment of mRNA to the ribosome. Recognizes and binds the 7-methylguanosine-containing mRNA cap during an early step in the initiation of protein synthesis and facilitates ribosome binding by inducing the unwinding of the mRNAs secondary structures. Key component of recessive resistance to potyviruses. (Microbial infection) Susceptibility host factor required for viral infection by recruiting viral RNAs to the host ribosomal complex via an interaction with viral genome-linked protein (VPg). The protein is Eukaryotic translation initiation factor 4E-1 of Arabidopsis thaliana (Mouse-ear cress).